The chain runs to 317 residues: Carbonic anhydrase 6 (317 aa).

An N-terminal signal peptide occupies residues 1–17 (MRALVSVVSLFFLGIQA). The 259-residue stretch at 19 to 277 (SDWSYSGDDG…NNHRVVEANF (259 aa)) folds into the Alpha-carbonic anhydrase domain. A disulfide bridge connects residues Cys-41 and Cys-223. The active-site Proton donor/acceptor is His-84. 3 residues coordinate Zn(2+): His-110, His-112, and His-137. 219 to 220 (TT) serves as a coordination point for substrate. A glycan (N-linked (GlcNAc...) asparagine) is linked at Asn-255.

The protein belongs to the alpha-carbonic anhydrase family. Zn(2+) serves as cofactor. In terms of tissue distribution, major constituent of saliva.

The protein localises to the secreted. It carries out the reaction hydrogencarbonate + H(+) = CO2 + H2O. In terms of biological role, reversible hydration of carbon dioxide. Its role in saliva is unknown. The chain is Carbonic anhydrase 6 (Ca6) from Mus musculus (Mouse).